Here is a 415-residue protein sequence, read N- to C-terminus: Actin-like protein 9 (415 aa).

Residues 1 to 22 form a disordered region; sequence MDVNGHPKFQPSPETDGPLPLT.

The protein belongs to the actin family. As to quaternary structure, interacts with ACTL7A.

Its subcellular location is the cytoplasmic vesicle. The protein localises to the secretory vesicle. It is found in the acrosome. The protein resides in the cytoplasm. It localises to the cytoskeleton. Its subcellular location is the perinuclear theca. Functionally, testis-specic protein that plays an important role in fusion of proacrosomal vesicles and perinuclear theca formation. The polypeptide is Actin-like protein 9 (Actl9) (Mus musculus (Mouse)).